Here is a 237-residue protein sequence, read N- to C-terminus: MRPSRRAPDELRAVSLERGVVKYAEGSCMVKFGDTHVLVTATLEERLPPWLKGQGRGWVTAEYGMLPRATLERTRREASAGKQGGRTVEIQRLIGRSLRAAVDLEALGERQITVDCDVIQADGGTRTASITGAWVALADCIGWMKARNMIKTSVLRDNVAAVSCGIYNGTPVLDLDYAEDSEADTDANFVMTGDGRIIEVQGTAEKTPFSQDEFLALLALAKKGVARLVDLQKMAVA.

Phosphate is bound by residues Arg86 and 124 to 126 (GTR).

It belongs to the RNase PH family. Homohexameric ring arranged as a trimer of dimers.

It catalyses the reaction tRNA(n+1) + phosphate = tRNA(n) + a ribonucleoside 5'-diphosphate. Its function is as follows. Phosphorolytic 3'-5' exoribonuclease that plays an important role in tRNA 3'-end maturation. Removes nucleotide residues following the 3'-CCA terminus of tRNAs; can also add nucleotides to the ends of RNA molecules by using nucleoside diphosphates as substrates, but this may not be physiologically important. Probably plays a role in initiation of 16S rRNA degradation (leading to ribosome degradation) during starvation. The chain is Ribonuclease PH from Nitrobacter hamburgensis (strain DSM 10229 / NCIMB 13809 / X14).